The primary structure comprises 314 residues: Ribosomal RNA small subunit methyltransferase H (314 aa).

S-adenosyl-L-methionine-binding positions include 58 to 60 (GGH), D76, F103, D119, and Q126.

It belongs to the methyltransferase superfamily. RsmH family.

It localises to the cytoplasm. The catalysed reaction is cytidine(1402) in 16S rRNA + S-adenosyl-L-methionine = N(4)-methylcytidine(1402) in 16S rRNA + S-adenosyl-L-homocysteine + H(+). Its function is as follows. Specifically methylates the N4 position of cytidine in position 1402 (C1402) of 16S rRNA. The sequence is that of Ribosomal RNA small subunit methyltransferase H from Gloeobacter violaceus (strain ATCC 29082 / PCC 7421).